The primary structure comprises 649 residues: Acetyl-coenzyme A synthetase (649 aa).

CoA contacts are provided by residues 189 to 192, Thr-311, and Asn-335; that span reads RGGK. ATP-binding positions include 387–389, 411–416, Asp-500, and Arg-515; these read GEP and DTWWQT. Ser-523 is a binding site for CoA. Position 526 (Arg-526) interacts with ATP. Mg(2+) is bound by residues Val-537, His-539, and Val-542. Arg-584 contributes to the CoA binding site. Lys-609 is subject to N6-acetyllysine.

It belongs to the ATP-dependent AMP-binding enzyme family. The cofactor is Mg(2+). Acetylated. Deacetylation by the SIR2-homolog deacetylase activates the enzyme.

The enzyme catalyses acetate + ATP + CoA = acetyl-CoA + AMP + diphosphate. Its function is as follows. Catalyzes the conversion of acetate into acetyl-CoA (AcCoA), an essential intermediate at the junction of anabolic and catabolic pathways. AcsA undergoes a two-step reaction. In the first half reaction, AcsA combines acetate with ATP to form acetyl-adenylate (AcAMP) intermediate. In the second half reaction, it can then transfer the acetyl group from AcAMP to the sulfhydryl group of CoA, forming the product AcCoA. The chain is Acetyl-coenzyme A synthetase from Rhizobium meliloti (strain 1021) (Ensifer meliloti).